We begin with the raw amino-acid sequence, 352 residues long: MAIISSSLDESNIPRSRKELRLVDSKIIADEKINKNLNIVRPTSFKEFIGQEQIKSSLKIAIDASKYRKEALEHTLLYGQPGLGKTTLALLISYEMNSKCRVASAPSIERPRDIVGLLLGLKEGEILFIDEIHRLNKLTEELLYSAMEDFRLDLTMGANRGARCRTINLPKFTLIGATTKLASISAPLRDRFGLCHKIEFYSNDELKQIIFNFSNLINLQLDSDACCSLAKISRGTPRIALRLLKRVRDYAQVMKKTNKISIEIIEKALDSQKIDNRGLDNVDRKFLSFLKLNNNNPIGLDSIAAGMGEESSMLEFVVEPYLIQIGFIMRTPRGRKLTSLGKKYISSNNEKY.

Residues 13–201 form a large ATPase domain (RuvB-L) region; it reads IPRSRKELRL…FGLCHKIEFY (189 aa). ATP-binding positions include L37, R41, G82, K85, T86, T87, 148–150, R191, Y201, and R238; that span reads EDF. T86 serves as a coordination point for Mg(2+). The tract at residues 202 to 273 is small ATPAse domain (RuvB-S); sequence SNDELKQIIF…IIEKALDSQK (72 aa). The head domain (RuvB-H) stretch occupies residues 276-352; it reads NRGLDNVDRK…KYISSNNEKY (77 aa). Positions 330 and 335 each coordinate DNA.

It belongs to the RuvB family. As to quaternary structure, homohexamer. Forms an RuvA(8)-RuvB(12)-Holliday junction (HJ) complex. HJ DNA is sandwiched between 2 RuvA tetramers; dsDNA enters through RuvA and exits via RuvB. An RuvB hexamer assembles on each DNA strand where it exits the tetramer. Each RuvB hexamer is contacted by two RuvA subunits (via domain III) on 2 adjacent RuvB subunits; this complex drives branch migration. In the full resolvosome a probable DNA-RuvA(4)-RuvB(12)-RuvC(2) complex forms which resolves the HJ.

It is found in the cytoplasm. It catalyses the reaction ATP + H2O = ADP + phosphate + H(+). Functionally, the RuvA-RuvB-RuvC complex processes Holliday junction (HJ) DNA during genetic recombination and DNA repair, while the RuvA-RuvB complex plays an important role in the rescue of blocked DNA replication forks via replication fork reversal (RFR). RuvA specifically binds to HJ cruciform DNA, conferring on it an open structure. The RuvB hexamer acts as an ATP-dependent pump, pulling dsDNA into and through the RuvAB complex. RuvB forms 2 homohexamers on either side of HJ DNA bound by 1 or 2 RuvA tetramers; 4 subunits per hexamer contact DNA at a time. Coordinated motions by a converter formed by DNA-disengaged RuvB subunits stimulates ATP hydrolysis and nucleotide exchange. Immobilization of the converter enables RuvB to convert the ATP-contained energy into a lever motion, pulling 2 nucleotides of DNA out of the RuvA tetramer per ATP hydrolyzed, thus driving DNA branch migration. The RuvB motors rotate together with the DNA substrate, which together with the progressing nucleotide cycle form the mechanistic basis for DNA recombination by continuous HJ branch migration. Branch migration allows RuvC to scan DNA until it finds its consensus sequence, where it cleaves and resolves cruciform DNA. The protein is Holliday junction branch migration complex subunit RuvB of Prochlorococcus marinus (strain MIT 9515).